The chain runs to 566 residues: Arginine--tRNA ligase (566 aa).

A 'HIGH' region motif is present at residues alanine 121 to histidine 131.

This sequence belongs to the class-I aminoacyl-tRNA synthetase family.

The protein localises to the cytoplasm. The catalysed reaction is tRNA(Arg) + L-arginine + ATP = L-arginyl-tRNA(Arg) + AMP + diphosphate. This Methanococcus maripaludis (strain DSM 14266 / JCM 13030 / NBRC 101832 / S2 / LL) protein is Arginine--tRNA ligase.